The primary structure comprises 341 residues: Protein DOWNY MILDEW RESISTANCE 6 (341 aa).

The region spanning 188-288 (QGQHMAVNYY…RLSVASFLCP (101 aa)) is the Fe2OG dioxygenase domain. 3 residues coordinate Fe cation: H212, D214, and H269. R279 lines the 2-oxoglutarate pocket.

It belongs to the iron/ascorbate-dependent oxidoreductase family. It depends on Fe(2+) as a cofactor.

It carries out the reaction salicylate + NADH + O2 + H(+) = 2,3-dihydroxybenzoate + NAD(+) + H2O. Functionally, converts salicylic acid (SA) to 2,3-dihydroxybenzoic acid (2,3-DHBA). Suppressor of immunity. Regulates negatively defense associated genes expression (e.g. PR-1, PR-2, and PR-5). Negative regulator of defense against Hyaloperonospora arabidopsidis. In terms of biological role, (Microbial infection) Required for susceptibility to the downy mildew pathogen Hyaloperonospora arabidopsidis. Its function is as follows. (Microbial infection) Required for susceptibility to Pseudomonas syringae pv. tomato DC3000. (Microbial infection) Required for susceptibility to the oomycete Phytophthora capsici. In Arabidopsis thaliana (Mouse-ear cress), this protein is Protein DOWNY MILDEW RESISTANCE 6.